A 668-amino-acid chain; its full sequence is DNA ligase (668 aa).

Residues 37–41, 86–87, and Glu-116 contribute to the NAD(+) site; these read DNVYD and SM. Lys-118 serves as the catalytic N6-AMP-lysine intermediate. Arg-139, Glu-173, Lys-288, and Lys-312 together coordinate NAD(+). Positions 406, 409, 424, and 429 each coordinate Zn(2+). The region spanning 591 to 668 is the BRCT domain; sequence IPDNPFKDKT…TEEEAIAQIK (78 aa).

The protein belongs to the NAD-dependent DNA ligase family. LigA subfamily. It depends on Mg(2+) as a cofactor. Requires Mn(2+) as cofactor.

The catalysed reaction is NAD(+) + (deoxyribonucleotide)n-3'-hydroxyl + 5'-phospho-(deoxyribonucleotide)m = (deoxyribonucleotide)n+m + AMP + beta-nicotinamide D-nucleotide.. Its function is as follows. DNA ligase that catalyzes the formation of phosphodiester linkages between 5'-phosphoryl and 3'-hydroxyl groups in double-stranded DNA using NAD as a coenzyme and as the energy source for the reaction. It is essential for DNA replication and repair of damaged DNA. This is DNA ligase from Lactobacillus acidophilus (strain ATCC 700396 / NCK56 / N2 / NCFM).